Consider the following 612-residue polypeptide: MESQSIFDAKSFLKQLTTRPGVYRMMDARGEVLYVGKARNLKNRVSSYFRNTGVSIKTRALVEKIADIEITITHSETEALLLEQNLIKTLKPPYNILLRDDKSYPYIYLSSHDEYPSLTFRRVRQKKTGKGRFFGPYTSAAAVRESLALLQKIFRIRQCEDSFFSNRSRPCLQHQIGRCSAPCVGLIDPQSYAEDMSHATMFLEGRNPEIINETIQQMEVASAQLDFERAAVLRDQVDYLRRVQEQQAIEGVARDIDAFALSSSLELVVVHGLFIRAGRVVGSKSFYLSERLESDDGDLLSSFLNQYYFGEHAIYGLPQEITTTVGLTDKDALKAAFKEVFNRNVRIEHNVRSNRAEWLHLAQTNANQALSTRMQSQDAQLQRWQSFCDALNLEASVKRVECFDVSHTFGEATVASCVVFGPEGAIKDLYRRYNIKDVPAGDDYHAMEQALTRRYSKLKDSDVGLPDIILIDGGKGQLGIAHQVFDELQITGVTLIGVAKGVTRKPGMETLFISADNSILNLPGDSTALHLIQQIRDEAHRFAITGHRNQRNKKRTQSVLDAVPGIGPKRRRDLLNYFGSVRNIERASLEEIKRVPGISEVIAQTIYAAFHE.

A GIY-YIG domain is found at 18–96; sequence TRPGVYRMMD…IKTLKPPYNI (79 aa). The region spanning 208-243 is the UVR domain; the sequence is PEIINETIQQMEVASAQLDFERAAVLRDQVDYLRRV.

Belongs to the UvrC family. Interacts with UvrB in an incision complex.

Its subcellular location is the cytoplasm. In terms of biological role, the UvrABC repair system catalyzes the recognition and processing of DNA lesions. UvrC both incises the 5' and 3' sides of the lesion. The N-terminal half is responsible for the 3' incision and the C-terminal half is responsible for the 5' incision. The chain is UvrABC system protein C from Hahella chejuensis (strain KCTC 2396).